Consider the following 221-residue polypeptide: Probable septum site-determining protein MinC (221 aa).

It belongs to the MinC family. Interacts with MinD and FtsZ.

Functionally, cell division inhibitor that blocks the formation of polar Z ring septums. Rapidly oscillates between the poles of the cell to destabilize FtsZ filaments that have formed before they mature into polar Z rings. Prevents FtsZ polymerization. The polypeptide is Probable septum site-determining protein MinC (Shewanella sp. (strain MR-7)).